A 97-amino-acid chain; its full sequence is Acylphosphatase (97 aa).

The Acylphosphatase-like domain maps to 5–92 (RAHVWISGRV…GEFVRFEITF (88 aa)). Residues Arg-20 and Asn-38 contribute to the active site.

Belongs to the acylphosphatase family.

The enzyme catalyses an acyl phosphate + H2O = a carboxylate + phosphate + H(+). The sequence is that of Acylphosphatase (acyP) from Syntrophobacter fumaroxidans (strain DSM 10017 / MPOB).